Consider the following 391-residue polypeptide: Phosphoglycerate kinase (391 aa).

Substrate contacts are provided by residues 21–23, Arg-36, 59–62, Arg-113, and Arg-146; these read DLN and HLGR. ATP-binding positions include Lys-197, Glu-319, and 345 to 348; that span reads GGDT.

It belongs to the phosphoglycerate kinase family. In terms of assembly, monomer.

Its subcellular location is the cytoplasm. The catalysed reaction is (2R)-3-phosphoglycerate + ATP = (2R)-3-phospho-glyceroyl phosphate + ADP. It functions in the pathway carbohydrate degradation; glycolysis; pyruvate from D-glyceraldehyde 3-phosphate: step 2/5. This chain is Phosphoglycerate kinase, found in Shewanella sp. (strain MR-7).